Here is a 134-residue protein sequence, read N- to C-terminus: MSSNAKWLNKVKWDEHGLVPVIAQEVGTNDVLMFAWMNRDALAKTIETGEAIYWSRSRKKLWHKGEESGHTQKVHEVRLDCDEDVVLLKVEQVGKIACHTGRHSCFFQKFEGGAKDGDWETVEPVLKNPETIYK.

A Mg(2+)-binding site is contributed by Asp80. Zn(2+) is bound at residue Cys81. Residues Asp82 and Asp84 each coordinate Mg(2+). Zn(2+) contacts are provided by Cys98 and Cys105.

It belongs to the PRA-CH family. Homodimer. Requires Mg(2+) as cofactor. It depends on Zn(2+) as a cofactor.

The protein localises to the cytoplasm. The enzyme catalyses 1-(5-phospho-beta-D-ribosyl)-5'-AMP + H2O = 1-(5-phospho-beta-D-ribosyl)-5-[(5-phospho-beta-D-ribosylamino)methylideneamino]imidazole-4-carboxamide. The protein operates within amino-acid biosynthesis; L-histidine biosynthesis; L-histidine from 5-phospho-alpha-D-ribose 1-diphosphate: step 3/9. Catalyzes the hydrolysis of the adenine ring of phosphoribosyl-AMP. The polypeptide is Phosphoribosyl-AMP cyclohydrolase (Janthinobacterium sp. (strain Marseille) (Minibacterium massiliensis)).